Here is a 370-residue protein sequence, read N- to C-terminus: Pantothenate kinase 3 (370 aa).

The Proton acceptor role is filled by glutamate 138. Acetyl-CoA is bound by residues serine 192, serine 195, and arginine 207.

Belongs to the type II pantothenate kinase family. In terms of assembly, homodimer. Highly expressed in the liver.

The protein resides in the cytoplasm. It carries out the reaction (R)-pantothenate + ATP = (R)-4'-phosphopantothenate + ADP + H(+). It participates in cofactor biosynthesis; coenzyme A biosynthesis; CoA from (R)-pantothenate: step 1/5. Subject to allosteric regulation, exists in two distinct conformational states, a catalytically incompetent (or open) conformation stabilized by the binding of acetyl(acyl)-CoA, and a catalytically competent (or closed) conformation stabilized by ATP-binding. Acetyl-CoA and its thioesters act as allosteric inhibitors and compete with the ATP-binding site. Strongly inhibited by acetyl-CoA, malonyl-CoA and palmitoyl CoA and modestly inhibited by CoA. Inhibited by calcium hopantenate. Its function is as follows. Catalyzes the phosphorylation of pantothenate to generate 4'-phosphopantothenate in the first and rate-determining step of coenzyme A (CoA) synthesis. The sequence is that of Pantothenate kinase 3 (Pank3) from Mus musculus (Mouse).